Here is a 299-residue protein sequence, read N- to C-terminus: Protoheme IX farnesyltransferase (299 aa).

A run of 9 helical transmembrane segments spans residues 17–37 (VVALILLTAEVGMFLAVPAPY), 41–61 (GLLVLSASIGISMAAASAAVF), 91–111 (ALMWGVFLGLVGLGILQLFVN), 113–133 (ITMVLTFVSLIGYAIIYTLYL), 141–161 (IVIGGAAGAAPPVLGWTAVSG), 168–188 (ACLLFLIVFIWTPPHFWALAI), 207–227 (GLAYTRTQILLYTVLLLLVSL), 228–248 (LPYLASMSGLIYLVVAIALGI), and 266–286 (IAWCTFVYSINYLMLLFVTLL).

Belongs to the UbiA prenyltransferase family. Protoheme IX farnesyltransferase subfamily.

The protein resides in the cell inner membrane. It carries out the reaction heme b + (2E,6E)-farnesyl diphosphate + H2O = Fe(II)-heme o + diphosphate. The protein operates within porphyrin-containing compound metabolism; heme O biosynthesis; heme O from protoheme: step 1/1. In terms of biological role, converts heme B (protoheme IX) to heme O by substitution of the vinyl group on carbon 2 of heme B porphyrin ring with a hydroxyethyl farnesyl side group. The sequence is that of Protoheme IX farnesyltransferase from Ruthia magnifica subsp. Calyptogena magnifica.